A 331-amino-acid polypeptide reads, in one-letter code: NADH-quinone oxidoreductase subunit H (331 aa).

8 consecutive transmembrane segments (helical) span residues 7 to 27 (ALVT…AVVI), 81 to 101 (MIFT…FAIV), 114 to 134 (IGIL…LFAG), 154 to 174 (ISYE…VGSF), 187 to 207 (VWFI…GVAV), 238 to 258 (FFVG…TLFF), 271 to 291 (WLSF…FILI), and 310 to 330 (VCLP…LAAA).

It belongs to the complex I subunit 1 family. In terms of assembly, NDH-1 is composed of 13 different subunits. Subunits NuoA, H, J, K, L, M, N constitute the membrane sector of the complex.

It localises to the cell inner membrane. The enzyme catalyses a quinone + NADH + 5 H(+)(in) = a quinol + NAD(+) + 4 H(+)(out). Functionally, NDH-1 shuttles electrons from NADH, via FMN and iron-sulfur (Fe-S) centers, to quinones in the respiratory chain. The immediate electron acceptor for the enzyme in this species is believed to be ubiquinone. Couples the redox reaction to proton translocation (for every two electrons transferred, four hydrogen ions are translocated across the cytoplasmic membrane), and thus conserves the redox energy in a proton gradient. This subunit may bind ubiquinone. This chain is NADH-quinone oxidoreductase subunit H, found in Pseudomonas aeruginosa (strain ATCC 15692 / DSM 22644 / CIP 104116 / JCM 14847 / LMG 12228 / 1C / PRS 101 / PAO1).